A 490-amino-acid chain; its full sequence is Pup--protein ligase (490 aa).

Position 9 (E9) interacts with Mg(2+). R53 contributes to the ATP binding site. Y55 provides a ligand contact to Mg(2+). The active-site Proton acceptor is D57. E63 contacts Mg(2+). S66 provides a ligand contact to ATP. The segment at 160 to 181 is disordered; sequence KTHPNGGPVPGSTDPASSTGVP. W441 is an ATP binding site.

This sequence belongs to the Pup ligase/Pup deamidase family. Pup-conjugating enzyme subfamily.

The catalysed reaction is ATP + [prokaryotic ubiquitin-like protein]-L-glutamate + [protein]-L-lysine = ADP + phosphate + N(6)-([prokaryotic ubiquitin-like protein]-gamma-L-glutamyl)-[protein]-L-lysine.. It participates in protein degradation; proteasomal Pup-dependent pathway. It functions in the pathway protein modification; protein pupylation. In terms of biological role, catalyzes the covalent attachment of the prokaryotic ubiquitin-like protein modifier Pup to the proteasomal substrate proteins, thereby targeting them for proteasomal degradation. This tagging system is termed pupylation. The ligation reaction involves the side-chain carboxylate of the C-terminal glutamate of Pup and the side-chain amino group of a substrate lysine. The polypeptide is Pup--protein ligase (Rothia mucilaginosa (strain DY-18) (Stomatococcus mucilaginosus)).